We begin with the raw amino-acid sequence, 341 residues long: Elongation factor Ts (341 aa).

Positions 80–83 are involved in Mg(2+) ion dislocation from EF-Tu; sequence TDFV.

This sequence belongs to the EF-Ts family.

It localises to the cytoplasm. Functionally, associates with the EF-Tu.GDP complex and induces the exchange of GDP to GTP. It remains bound to the aminoacyl-tRNA.EF-Tu.GTP complex up to the GTP hydrolysis stage on the ribosome. This Lactobacillus helveticus (strain DPC 4571) protein is Elongation factor Ts.